Reading from the N-terminus, the 338-residue chain is UDP-3-O-acylglucosamine N-acyltransferase (338 aa).

His239 functions as the Proton acceptor in the catalytic mechanism.

This sequence belongs to the transferase hexapeptide repeat family. LpxD subfamily. As to quaternary structure, homotrimer.

The catalysed reaction is a UDP-3-O-[(3R)-3-hydroxyacyl]-alpha-D-glucosamine + a (3R)-hydroxyacyl-[ACP] = a UDP-2-N,3-O-bis[(3R)-3-hydroxyacyl]-alpha-D-glucosamine + holo-[ACP] + H(+). The protein operates within bacterial outer membrane biogenesis; LPS lipid A biosynthesis. In terms of biological role, catalyzes the N-acylation of UDP-3-O-acylglucosamine using 3-hydroxyacyl-ACP as the acyl donor. Is involved in the biosynthesis of lipid A, a phosphorylated glycolipid that anchors the lipopolysaccharide to the outer membrane of the cell. The chain is UDP-3-O-acylglucosamine N-acyltransferase from Xylella fastidiosa (strain 9a5c).